The primary structure comprises 462 residues: 2-amino-5-chloromuconic acid deaminase (462 aa).

Active-site charge relay system residues include lysine 79 and serine 156. The Acyl-ester intermediate role is filled by serine 180.

It belongs to the amidase family.

The enzyme catalyses (2Z,4E)-2-aminomuconate + H2O = (3E)-2-oxohex-3-enedioate + NH4(+). It functions in the pathway xenobiotic degradation; nitrobenzene degradation. Its pathway is xenobiotic degradation; 4-chloronitrobenzene degradation. Its function is as follows. Involved in the biodegradation of nitroaromatic and chlorinated nitroaromatic compounds. Catalyzes the conversion of 2-amino-5-chloromuconic acid into 2-hydroxy-5-chloromuconic acid and ammonia. Also able to catalyze the transformation of 2-aminomuconic acid into 2-hydroxymuconic acid. This chain is 2-amino-5-chloromuconic acid deaminase, found in Comamonas testosteroni (Pseudomonas testosteroni).